We begin with the raw amino-acid sequence, 133 residues long: Ribonuclease P protein component (133 aa).

Belongs to the RnpA family. Consists of a catalytic RNA component (M1 or rnpB) and a protein subunit.

It catalyses the reaction Endonucleolytic cleavage of RNA, removing 5'-extranucleotides from tRNA precursor.. Functionally, RNaseP catalyzes the removal of the 5'-leader sequence from pre-tRNA to produce the mature 5'-terminus. It can also cleave other RNA substrates such as 4.5S RNA. The protein component plays an auxiliary but essential role in vivo by binding to the 5'-leader sequence and broadening the substrate specificity of the ribozyme. The protein is Ribonuclease P protein component of Corynebacterium glutamicum (strain ATCC 13032 / DSM 20300 / JCM 1318 / BCRC 11384 / CCUG 27702 / LMG 3730 / NBRC 12168 / NCIMB 10025 / NRRL B-2784 / 534).